A 440-amino-acid polypeptide reads, in one-letter code: Putative purine permease YwdJ (440 aa).

A run of 13 helical transmembrane segments spans residues 3–23, 39–59, 67–87, 96–116, 130–150, 156–176, 188–208, 231–251, 283–303, 314–334, 341–361, 374–394, and 399–419; these read LVLG…VVPV, LIQS…LKGH, PAGL…TVFA, LQGA…FKVI, VYLL…ILGI, GVDG…FIMT, ILLA…AKPI, GLII…LASM, LLSG…AGFI, FMLG…MNTF, VGFA…FAEF, SIIG…ETAL, and PVFI…AIAA.

It belongs to the nucleobase:cation symporter-2 (NCS2) (TC 2.A.40) family.

The protein localises to the cell membrane. The polypeptide is Putative purine permease YwdJ (ywdJ) (Bacillus subtilis (strain 168)).